The primary structure comprises 163 residues: Sorting nexin-3 (163 aa).

The disordered stretch occupies residues 1–20; it reads MASDQDNSGLDAPGSQFHRP. Positions 42-159 constitute a PX domain; it reads NFLEIEVRNP…AAFVQDPNWD (118 aa). Positions 85, 87, 111, 116, and 125 each coordinate a 1,2-diacyl-sn-glycero-3-phospho-(1D-myo-inositol-3-phosphate).

It belongs to the sorting nexin family.

It is found in the cytoplasm. The protein resides in the golgi apparatus membrane. The protein localises to the prevacuolar compartment membrane. Its function is as follows. Required for retention of late Golgi membrane proteins. Component of the retrieval machinery that functions by direct interaction with the cytosolic tails of certain TGN membrane proteins during the sorting/budding process at the prevacuolar compartment. Binds phosphatidylinositol 3-phosphate (PtdIns(P3)). The polypeptide is Sorting nexin-3 (SNX3) (Gibberella zeae (strain ATCC MYA-4620 / CBS 123657 / FGSC 9075 / NRRL 31084 / PH-1) (Wheat head blight fungus)).